We begin with the raw amino-acid sequence, 352 residues long: Large ribosomal subunit protein uL5m (352 aa).

The interval 28–109 (STQTGAGAAA…HPIQSPPSSD (82 aa)) is disordered. Basic and acidic residues predominate over residues 63 to 80 (EEDKKEFRPWKRAADRKA).

This sequence belongs to the universal ribosomal protein uL5 family. As to quaternary structure, component of the mitochondrial large ribosomal subunit (mt-LSU). Mature N.crassa 74S mitochondrial ribosomes consist of a small (37S) and a large (54S) subunit. The 37S small subunit contains a 16S ribosomal RNA (16S mt-rRNA) and 32 different proteins. The 54S large subunit contains a 23S rRNA (23S mt-rRNA) and 42 different proteins. Unlike bacterial L5, uL5m does not bind zinc.

It localises to the mitochondrion. Its function is as follows. Component of the mitochondrial ribosome (mitoribosome), a dedicated translation machinery responsible for the synthesis of mitochondrial genome-encoded proteins, including at least some of the essential transmembrane subunits of the mitochondrial respiratory chain. The mitoribosomes are attached to the mitochondrial inner membrane and translation products are cotranslationally integrated into the membrane. The protein is Large ribosomal subunit protein uL5m (mrpl7) of Neurospora crassa (strain ATCC 24698 / 74-OR23-1A / CBS 708.71 / DSM 1257 / FGSC 987).